A 208-amino-acid polypeptide reads, in one-letter code: Putative ribosomal protein uS2-like (208 aa).

It belongs to the universal ribosomal protein uS2 family.

The protein resides in the plastid. It localises to the chloroplast. In Chlamydomonas reinhardtii (Chlamydomonas smithii), this protein is Putative ribosomal protein uS2-like (rps2-2).